A 278-amino-acid chain; its full sequence is MATH domain and coiled-coil domain-containing protein At1g31400 (278 aa).

Residues 6–131 (EKRITWTIKN…SGQVKIVAEV (126 aa)) form the MATH domain. Residues 232 to 267 (KLDWLEKKLKEVGKTRMQQLEQNLKDLKESLCWSSD) adopt a coiled-coil conformation.

This Arabidopsis thaliana (Mouse-ear cress) protein is MATH domain and coiled-coil domain-containing protein At1g31400.